A 275-amino-acid chain; its full sequence is 3-methyl-2-oxobutanoate hydroxymethyltransferase (275 aa).

2 residues coordinate Mg(2+): D44 and D83. Residues 44–45 (DS), D83, and K113 each bind 3-methyl-2-oxobutanoate. E115 lines the Mg(2+) pocket. E182 acts as the Proton acceptor in catalysis.

This sequence belongs to the PanB family. Homodecamer; pentamer of dimers. Mg(2+) serves as cofactor.

It is found in the cytoplasm. It catalyses the reaction 3-methyl-2-oxobutanoate + (6R)-5,10-methylene-5,6,7,8-tetrahydrofolate + H2O = 2-dehydropantoate + (6S)-5,6,7,8-tetrahydrofolate. It functions in the pathway cofactor biosynthesis; (R)-pantothenate biosynthesis; (R)-pantoate from 3-methyl-2-oxobutanoate: step 1/2. Catalyzes the reversible reaction in which hydroxymethyl group from 5,10-methylenetetrahydrofolate is transferred onto alpha-ketoisovalerate to form ketopantoate. In Clostridium novyi (strain NT), this protein is 3-methyl-2-oxobutanoate hydroxymethyltransferase.